Consider the following 321-residue polypeptide: NADH-quinone oxidoreductase subunit H (321 aa).

Helical transmembrane passes span 9-29 (LLAIVKAIVTLLSVVTIGAYM), 78-98 (IIFTLAPIIAFTSLLLVFAIM), 111-131 (IGILFFLMMAGISVYAILLGG), 156-176 (FLGLSIMGVVAQAGSFNISTI), 183-203 (IWNIVPQFFGFITFYLAGLAI), 234-254 (FFIGEYISLVTISALTITLFF), 262-282 (LPPYIWFIIKTTVFIIIFILI), and 296-316 (ILGWTICLPLTLMNLLVTAIV).

Belongs to the complex I subunit 1 family. As to quaternary structure, NDH-1 is composed of 14 different subunits. Subunits NuoA, H, J, K, L, M, N constitute the membrane sector of the complex.

The protein localises to the cell membrane. The enzyme catalyses a quinone + NADH + 5 H(+)(in) = a quinol + NAD(+) + 4 H(+)(out). NDH-1 shuttles electrons from NADH, via FMN and iron-sulfur (Fe-S) centers, to quinones in the respiratory chain. The immediate electron acceptor for the enzyme in this species is believed to be ubiquinone. Couples the redox reaction to proton translocation (for every two electrons transferred, four hydrogen ions are translocated across the cytoplasmic membrane), and thus conserves the redox energy in a proton gradient. This subunit may bind ubiquinone. The polypeptide is NADH-quinone oxidoreductase subunit H (Baumannia cicadellinicola subsp. Homalodisca coagulata).